Here is a 613-residue protein sequence, read N- to C-terminus: Ribosome-associated molecular chaperone SSB1 (613 aa).

The nucleotide binding domain (NBD) stretch occupies residues 1–391; the sequence is MAEGVFQGAI…ILTGQSTSED (391 aa). ATP is bound by residues 16–18, lysine 73, 205–207, 271–278, and glycine 342; these read TTY, GGT, and ERAKRTLS. The interval 392-402 is inter-domain linker; the sequence is TKDLLLLDVAP. The tract at residues 403-613 is substrate binding domain (SBD); it reads LSLGVGMQGD…RVVTKAMSSR (211 aa). A lid domain (SBDalpha) region spans residues 516–612; the sequence is SDEIEKMVNQ…KRVVTKAMSS (97 aa). The Nuclear export signal signature appears at 574 to 582; it reads IESALSDAL.

It belongs to the heat shock protein 70 family. Ssb-type Hsp70 subfamily. In terms of assembly, binds to ribosomes. Binds close to the ribosomal tunnel exit via contacts with both ribosomal proteins and rRNA. Directly interacts with nascent polypeptides. This interaction is dependent on the ribosome-associated complex (RAC). Interacts with SSE1. Interacts with FES1.

The protein localises to the cytoplasm. The catalysed reaction is ATP + H2O = ADP + phosphate + H(+). Its function is as follows. Ribosome-bound, Hsp70-type chaperone that assists in the cotranslational folding of newly synthesized proteins in the cytosol. Stimulates folding by interacting with nascent chains, binding to short, largely hydrophobic sequences exposed by unfolded proteins, thereby stabilizing longer, more slowly translated, and aggregation-prone nascent polypeptides and domains that cannot fold stably until fully synthesized. The Hsp70-protein substrate interaction depends on ATP-binding and on allosteric regulation between the NBD and the SBD. The ATP-bound state is characterized by a fast exchange rate of substrate (low affinity state), while in the ADP-bound state exchange is much slower (high affinity state). During the Hsp70 cycle, the chaperone switches between the ATP-bound state (open conformation) and the ADP-bound state (closed conformation) by major conformational rearrangements involving mainly the lid domain. Ssb cooperates with a specific Hsp40/Hsp70 co-chaperone termed the ribosome-associated complex (RAC), which stimulates the ATPase activity of the ribosome-associated pool of Ssbs and switches it to the high affinity substrate binding state. Hsp110 chaperone SSE1 and FES1 act as nucleotide exchange factors that cause substrate release. The chain is Ribosome-associated molecular chaperone SSB1 (SSB1) from Zygosaccharomyces rouxii (strain ATCC 2623 / CBS 732 / NBRC 1130 / NCYC 568 / NRRL Y-229).